The primary structure comprises 433 residues: Steroid hormone receptor ERR2 (433 aa).

Residues M1–S38 form a disordered region. The interaction with NANOG stretch occupies residues Y93–K211. Residues K100–K186 constitute a DNA-binding region (nuclear receptor). NR C4-type zinc fingers lie at residues C103–C123 and C139–C163. The tract at residues P203–V433 is essential for ESRRB transcriptional activity and interaction with NCOA3. The NR LBD domain occupies P208 to K432.

The protein belongs to the nuclear hormone receptor family. NR3 subfamily. Binds DNA as a monomer. Interacts with NR0B1; represses ESRRB activity at the GATA6 promoter. Interacts with NANOG; reciprocally modulates their transcriptional activities and activates POU5F1 expression. Interacts with NCOA3; mediates the interaction between ESRRB and RNA polymerase II complexes and allows NCOA3 corecruitment to ESRRB, KLF4, NANOG, and SOX2 enhancer regions to trigger ESRRB-dependent gene activation involved in self-renewal and pluripotency. Interacts with KDM1A; co-occupes the core set of ESRRB targets including ELF5 and EOMES. Interacts with the multiprotein complex Integrator, at least composed of INTS1, INTS2, INTS3, INTS4, INTS5, INTS6, INTS7, INTS8, INTS9/RC74, INTS10, INTS11/CPSF3L and INTS12; ESRRB is probably not a core component of the integrator complex and associates to integrator via its interaction with INTS1 and INTS9; attracts the transcriptional machinery. Interacts with JARID2. Interacts with POU5F1; recruits ESRRB near the POU5F1-SOX2 element in the NANOG proximal promoter leading to activation of NANOG expression; the interaction is DNA independent. Acetylated by PCAF/KAT2 (in vitro). As to expression, highly expressed in undifferentiated ESCs. Expressed in immature horizontal cells and in rod photoreceptors at intermediate and late stages of differentiation. Expressed in endolymph-producing epithelial cells.

It localises to the nucleus. It is found in the cytoplasm. The protein localises to the chromosome. Functionally, transcription factor that binds a canonical ESRRB recognition (ERRE) sequence 5'TCAAGGTCA-3' localized on promoter and enhancer of targets genes regulating their expression or their transcriptional activity. Plays a role, in a LIF-independent manner, in maintainance of self-renewal and pluripotency of embryonic and trophoblast stem cells through different signaling pathways including FGF signaling pathway and Wnt signaling pathways. Involved in morula development (2-16 cells embryos) by acting as a regulator at the 8-cell stage. Upon FGF signaling pathway activation, interacts with KDM1A by directly binding to enhancer site of ELF5 and EOMES and activating their transcription leading to self-renewal of trophoblast stem cells. Also regulates expression of multiple rod-specific genes and is required for survival of this cell type. Plays a role as transcription factor activator of GATA6, NR0B1, POU5F1 and PERM1. Plays a role as transcription factor repressor of NFE2L2 transcriptional activity and ESR1 transcriptional activity. During mitosis remains bound to a subset of interphase target genes, including pluripotency regulators, through the canonical ESRRB recognition (ERRE) sequence, leading to their transcriptional activation in early G1 phase. Can coassemble on structured DNA elements with other transcription factors like SOX2, POU5F1, KDM1A and NCOA3 to trigger ESRRB-dependent gene activation. This mechanism, in the case of SOX2 corecruitment prevents the embryonic stem cells (ESCs) to epiblast stem cells (EpiSC) transition through positive regulation of NR0B1 that inhibits the EpiSC transcriptional program. Also plays a role inner ear development by controlling expression of ion channels and transporters and in early placentation. This is Steroid hormone receptor ERR2 from Mus musculus (Mouse).